The sequence spans 131 residues: Holo-[acyl-carrier-protein] synthase (131 aa).

D8 and E59 together coordinate Mg(2+).

This sequence belongs to the P-Pant transferase superfamily. AcpS family. Mg(2+) is required as a cofactor.

The protein localises to the cytoplasm. It carries out the reaction apo-[ACP] + CoA = holo-[ACP] + adenosine 3',5'-bisphosphate + H(+). Its function is as follows. Transfers the 4'-phosphopantetheine moiety from coenzyme A to a Ser of acyl-carrier-protein. This chain is Holo-[acyl-carrier-protein] synthase, found in Rickettsia felis (strain ATCC VR-1525 / URRWXCal2) (Rickettsia azadi).